Here is a 163-residue protein sequence, read N- to C-terminus: Nucleotide-binding protein SYNPCC7002_A1983 (163 aa).

The protein belongs to the YajQ family.

Functionally, nucleotide-binding protein. This Picosynechococcus sp. (strain ATCC 27264 / PCC 7002 / PR-6) (Agmenellum quadruplicatum) protein is Nucleotide-binding protein SYNPCC7002_A1983.